Reading from the N-terminus, the 669-residue chain is Threonine--tRNA ligase (669 aa).

Residues 3–60 form the TGS domain; it reads DAQQITLIVDGEETKVTEGTTGAELFFERRDVVVARVNGVLKDLDQVLTEGADVEGVT. The segment at 260-566 is catalytic; it reads DHRKLGVELD…LTEHYAGAFP (307 aa). Zn(2+)-binding residues include Cys-365, His-416, and His-543.

It belongs to the class-II aminoacyl-tRNA synthetase family. Homodimer. Requires Zn(2+) as cofactor.

The protein localises to the cytoplasm. The enzyme catalyses tRNA(Thr) + L-threonine + ATP = L-threonyl-tRNA(Thr) + AMP + diphosphate + H(+). In terms of biological role, catalyzes the attachment of threonine to tRNA(Thr) in a two-step reaction: L-threonine is first activated by ATP to form Thr-AMP and then transferred to the acceptor end of tRNA(Thr). Also edits incorrectly charged L-seryl-tRNA(Thr). This chain is Threonine--tRNA ligase, found in Paenarthrobacter aurescens (strain TC1).